The following is a 478-amino-acid chain: Nuclear distribution protein PAC1 (478 aa).

The region spanning 9–41 (QAEELHKAMIAYLLSANLPKSAAALREELADSV) is the LisH domain. Residues 60–87 (TSVVRLQKKIMDLESRNNALQSELDSAT) are a coiled coil. WD repeat units lie at residues 113-154 (SHRE…RTIK), 156-196 (HTKA…KNIR), 200-247 (GHDH…CVKT), 250-289 (GHVD…TKST), 292-352 (GHEH…IKTL), 354-393 (GHDN…KCVR), 398-439 (AHGH…AASA), and 440-477 (INGV…RVFA).

The protein belongs to the WD repeat LIS1/nudF family. Self-associates. Interacts with NDL1 and dynein.

The protein localises to the cytoplasm. It localises to the cytoskeleton. The protein resides in the spindle pole. Positively regulates the activity of the minus-end directed microtubule motor protein dynein. May enhance dynein-mediated microtubule sliding by targeting dynein to the microtubule plus end. Required for nuclear migration during vegetative growth as well as development. Required for retrograde early endosome (EE) transport from the hyphal tip. Required for localization of dynein to the mitotic spindle poles. Recruits additional proteins to the dynein complex at SPBs. The chain is Nuclear distribution protein PAC1 from Paracoccidioides brasiliensis (strain Pb18).